Here is a 244-residue protein sequence, read N- to C-terminus: 5-oxoprolinase subunit A (244 aa).

It belongs to the LamB/PxpA family. Forms a complex composed of PxpA, PxpB and PxpC.

It carries out the reaction 5-oxo-L-proline + ATP + 2 H2O = L-glutamate + ADP + phosphate + H(+). In terms of biological role, catalyzes the cleavage of 5-oxoproline to form L-glutamate coupled to the hydrolysis of ATP to ADP and inorganic phosphate. This chain is 5-oxoprolinase subunit A, found in Salmonella schwarzengrund (strain CVM19633).